We begin with the raw amino-acid sequence, 328 residues long: Beta-ketoacyl-[acyl-carrier-protein] synthase III (328 aa).

Catalysis depends on residues cysteine 113 and histidine 253. The ACP-binding stretch occupies residues 254–258 (QANLR). The active site involves asparagine 283.

This sequence belongs to the thiolase-like superfamily. FabH family. Homodimer.

The protein localises to the cytoplasm. It carries out the reaction malonyl-[ACP] + acetyl-CoA + H(+) = 3-oxobutanoyl-[ACP] + CO2 + CoA. The protein operates within lipid metabolism; fatty acid biosynthesis. Its function is as follows. Catalyzes the condensation reaction of fatty acid synthesis by the addition to an acyl acceptor of two carbons from malonyl-ACP. Catalyzes the first condensation reaction which initiates fatty acid synthesis and may therefore play a role in governing the total rate of fatty acid production. Possesses both acetoacetyl-ACP synthase and acetyl transacylase activities. Its substrate specificity determines the biosynthesis of branched-chain and/or straight-chain of fatty acids. The polypeptide is Beta-ketoacyl-[acyl-carrier-protein] synthase III (Fusobacterium nucleatum subsp. nucleatum (strain ATCC 25586 / DSM 15643 / BCRC 10681 / CIP 101130 / JCM 8532 / KCTC 2640 / LMG 13131 / VPI 4355)).